A 352-amino-acid chain; its full sequence is Glycerol-1-phosphate dehydrogenase [NAD(P)+] (352 aa).

NAD(+)-binding positions include 98-102 and 120-123; these read GKAID and TAAS. Substrate is bound at residue Asp-125. NAD(+) is bound at residue Ser-129. Position 172 (Asp-172) interacts with substrate. Asp-172 and His-252 together coordinate Zn(2+). His-256 is a substrate binding site. His-268 contributes to the Zn(2+) binding site.

The protein belongs to the glycerol-1-phosphate dehydrogenase family. Zn(2+) is required as a cofactor.

The protein localises to the cytoplasm. The catalysed reaction is sn-glycerol 1-phosphate + NAD(+) = dihydroxyacetone phosphate + NADH + H(+). It carries out the reaction sn-glycerol 1-phosphate + NADP(+) = dihydroxyacetone phosphate + NADPH + H(+). It functions in the pathway membrane lipid metabolism; glycerophospholipid metabolism. In terms of biological role, catalyzes the NAD(P)H-dependent reduction of dihydroxyacetonephosphate (DHAP or glycerone phosphate) to glycerol 1-phosphate (G1P). The G1P thus generated is used as the glycerophosphate backbone of phospholipids in the cellular membranes of Archaea. This is Glycerol-1-phosphate dehydrogenase [NAD(P)+] from Haloarcula marismortui (strain ATCC 43049 / DSM 3752 / JCM 8966 / VKM B-1809) (Halobacterium marismortui).